The following is a 382-amino-acid chain: Homoserine O-acetyltransferase (382 aa).

The 311-residue stretch at 50–360 (NAVLICHALT…DKGHDAFLLD (311 aa)) folds into the AB hydrolase-1 domain. Serine 155 functions as the Nucleophile in the catalytic mechanism. Arginine 225 contributes to the substrate binding site. Residues aspartate 321 and histidine 354 contribute to the active site. Aspartate 355 contacts substrate.

This sequence belongs to the AB hydrolase superfamily. MetX family. In terms of assembly, homodimer.

The protein resides in the cytoplasm. It catalyses the reaction L-homoserine + acetyl-CoA = O-acetyl-L-homoserine + CoA. It functions in the pathway amino-acid biosynthesis; L-methionine biosynthesis via de novo pathway; O-acetyl-L-homoserine from L-homoserine: step 1/1. Its function is as follows. Transfers an acetyl group from acetyl-CoA to L-homoserine, forming acetyl-L-homoserine. In Caulobacter vibrioides (strain ATCC 19089 / CIP 103742 / CB 15) (Caulobacter crescentus), this protein is Homoserine O-acetyltransferase.